The primary structure comprises 579 residues: General transcription and DNA repair factor IIH subunit TFB1-3 (579 aa).

2 BSD domains span residues 107-161 (LTPA…GKDS) and 186-238 (RTNR…YLYS).

The protein belongs to the TFB1 family. Component of the 7-subunit TFIIH core complex composed of XPB, XPD, TFB1/GTF2H1, GTF2H2/P44, TFB4/GTF2H3, TFB2/GTF2H4 and TFB5/GTF2H5, which is active in NER. The core complex associates with the 3-subunit CDK-activating kinase (CAK) module composed of CYCH1/cyclin H1, CDKD and MAT1/At4g30820 to form the 10-subunit holoenzyme (holo-TFIIH) active in transcription.

The protein resides in the nucleus. In terms of biological role, component of the general transcription and DNA repair factor IIH (TFIIH) core complex, which is involved in general and transcription-coupled nucleotide excision repair (NER) of damaged DNA and, when complexed to CAK, in RNA transcription by RNA polymerase II. In NER, TFIIH acts by opening DNA around the lesion to allow the excision of the damaged oligonucleotide and its replacement by a new DNA fragment. In transcription, TFIIH has an essential role in transcription initiation. When the pre-initiation complex (PIC) has been established, TFIIH is required for promoter opening and promoter escape. Phosphorylation of the C-terminal tail (CTD) of the largest subunit of RNA polymerase II by the kinase module CAK controls the initiation of transcription. This Arabidopsis thaliana (Mouse-ear cress) protein is General transcription and DNA repair factor IIH subunit TFB1-3.